The following is a 128-amino-acid chain: Fluoride-specific ion channel FluC (128 aa).

4 helical membrane passes run 5 to 25, 35 to 55, 67 to 87, and 96 to 116; these read IVAI…LSLA, LGTL…AVVF, LFVI…SVEV, and FGWA…LTAL. Na(+) contacts are provided by glycine 75 and threonine 78.

This sequence belongs to the fluoride channel Fluc/FEX (TC 1.A.43) family.

Its subcellular location is the cell inner membrane. It carries out the reaction fluoride(in) = fluoride(out). With respect to regulation, na(+) is not transported, but it plays an essential structural role and its presence is essential for fluoride channel function. Its function is as follows. Fluoride-specific ion channel. Important for reducing fluoride concentration in the cell, thus reducing its toxicity. The sequence is that of Fluoride-specific ion channel FluC from Burkholderia orbicola (strain MC0-3).